The chain runs to 443 residues: Exodeoxyribonuclease 7 large subunit (443 aa).

This sequence belongs to the XseA family. In terms of assembly, heterooligomer composed of large and small subunits.

It is found in the cytoplasm. It carries out the reaction Exonucleolytic cleavage in either 5'- to 3'- or 3'- to 5'-direction to yield nucleoside 5'-phosphates.. Functionally, bidirectionally degrades single-stranded DNA into large acid-insoluble oligonucleotides, which are then degraded further into small acid-soluble oligonucleotides. The polypeptide is Exodeoxyribonuclease 7 large subunit (Legionella pneumophila (strain Paris)).